We begin with the raw amino-acid sequence, 71 residues long: Translation initiation factor IF-1 (71 aa).

Residues 1-71 enclose the S1-like domain; sequence MAKQSAIEQD…LSKARITYRY (71 aa).

It belongs to the IF-1 family. In terms of assembly, component of the 30S ribosomal translation pre-initiation complex which assembles on the 30S ribosome in the order IF-2 and IF-3, IF-1 and N-formylmethionyl-tRNA(fMet); mRNA recruitment can occur at any time during PIC assembly.

Its subcellular location is the cytoplasm. One of the essential components for the initiation of protein synthesis. Stabilizes the binding of IF-2 and IF-3 on the 30S subunit to which N-formylmethionyl-tRNA(fMet) subsequently binds. Helps modulate mRNA selection, yielding the 30S pre-initiation complex (PIC). Upon addition of the 50S ribosomal subunit IF-1, IF-2 and IF-3 are released leaving the mature 70S translation initiation complex. The chain is Translation initiation factor IF-1 from Flavobacterium psychrophilum (strain ATCC 49511 / DSM 21280 / CIP 103535 / JIP02/86).